The following is a 493-amino-acid chain: Probable malate:quinone oxidoreductase (493 aa).

The protein belongs to the MQO family. It depends on FAD as a cofactor.

The enzyme catalyses (S)-malate + a quinone = a quinol + oxaloacetate. It functions in the pathway carbohydrate metabolism; tricarboxylic acid cycle; oxaloacetate from (S)-malate (quinone route): step 1/1. This chain is Probable malate:quinone oxidoreductase, found in Mycobacterium tuberculosis (strain ATCC 25177 / H37Ra).